Reading from the N-terminus, the 268-residue chain is Undecaprenyl-diphosphatase (268 aa).

7 consecutive transmembrane segments (helical) span residues Phe-47 to Leu-67, Phe-83 to Lys-103, Leu-109 to Val-129, Tyr-144 to Val-164, Ala-184 to Phe-204, Leu-218 to Leu-238, and Phe-246 to Leu-266.

This sequence belongs to the UppP family.

The protein resides in the cell inner membrane. It catalyses the reaction di-trans,octa-cis-undecaprenyl diphosphate + H2O = di-trans,octa-cis-undecaprenyl phosphate + phosphate + H(+). Catalyzes the dephosphorylation of undecaprenyl diphosphate (UPP). Confers resistance to bacitracin. This Bradyrhizobium sp. (strain ORS 278) protein is Undecaprenyl-diphosphatase.